The chain runs to 147 residues: Hemoglobin subunit beta (147 aa).

N-acetylvaline is present on valine 2. The region spanning 3 to 147 is the Globin domain; sequence HLTGEEKAAV…VANALAHKYH (145 aa). At threonine 13 the chain carries Phosphothreonine. Serine 45 is modified (phosphoserine). Lysine 60 is subject to N6-acetyllysine. Position 64 (histidine 64) interacts with heme b. Position 83 is an N6-acetyllysine (lysine 83). A heme b-binding site is contributed by histidine 93. Position 94 is an S-nitrosocysteine (cysteine 94). The residue at position 145 (lysine 145) is an N6-acetyllysine.

This sequence belongs to the globin family. Heterotetramer of two alpha chains and two beta chains. As to expression, red blood cells.

Involved in oxygen transport from the lung to the various peripheral tissues. This Ailuropoda melanoleuca (Giant panda) protein is Hemoglobin subunit beta (HBB).